Consider the following 303-residue polypeptide: MHSPVLLLIDGFNLLSRGYFATSYGKDEAQLPRNEAGYYINALRVFFPKLFQLIREHNVTHVAVAWDVKREDSHRRQAFAFYKASRGELPEALIEQYETATSLLEEIGVAQVTIPPYEADDTIGAFACRWAKEEKGHCFIYSNDRDLLQLLSKSTSQIISSKGKDLIYTEENFRNDYNISPAQWVDVKALLGDKSDNIPGCPGVGEKSALPLIQQYGTIETLYEQIEDLDPKYKRYHKKLVAGEESVIISKELATITTEIEAISSFSLNSLVLTTPADLIIDTLARCGIRVKLAPVQTELKLG.

A 5'-3' exonuclease domain is found at 179 to 262; the sequence is ISPAQWVDVK…LATITTEIEA (84 aa).

Functionally, 5'-3' exonuclease acting preferentially on double-stranded DNA. The polypeptide is 5'-3' exonuclease (Halalkalibacterium halodurans (strain ATCC BAA-125 / DSM 18197 / FERM 7344 / JCM 9153 / C-125) (Bacillus halodurans)).